A 153-amino-acid chain; its full sequence is Interleukin-4 (153 aa).

The signal sequence occupies residues 1 to 24 (MGLTSQLLPPLFFLLACAGNFAHG). Intrachain disulfides connect Cys27-Cys151, Cys48-Cys89, and Cys70-Cys123. N-linked (GlcNAc...) asparagine glycosylation is present at Asn62.

It belongs to the IL-4/IL-13 family.

Its subcellular location is the secreted. Its function is as follows. Participates in at least several B-cell activation processes as well as of other cell types. It is a costimulator of DNA-synthesis. It induces the expression of class II MHC molecules on resting B-cells. It enhances both secretion and cell surface expression of IgE and IgG1. It also regulates the expression of the low affinity Fc receptor for IgE (CD23) on both lymphocytes and monocytes. Positively regulates IL31RA expression in macrophages. Stimulates autophagy in dendritic cells by interfering with mTORC1 signaling and through the induction of RUFY4. The polypeptide is Interleukin-4 (IL4) (Cercocebus atys (Sooty mangabey)).